Consider the following 154-residue polypeptide: Cyclin-dependent protein kinase inhibitor SMR11 (154 aa).

A disordered region spans residues 1-44 (MEQEEPCEAKETASSSIEPKTPNPNVPDSIPAIDSDSSLSEEEI). The span at 27 to 38 (PDSIPAIDSDSS) shows a compositional bias: low complexity.

Interacts with CYCB2-4.

Probable cyclin-dependent protein kinase (CDK) inhibitor that functions as a repressor of mitosis in the endoreduplication cell cycle. This Arabidopsis thaliana (Mouse-ear cress) protein is Cyclin-dependent protein kinase inhibitor SMR11.